The sequence spans 589 residues: Protein FAM161B (589 aa).

Disordered stretches follow at residues 1–166, 265–297, and 386–444; these read MTVG…VCSW, KKEQQKEDAPQRDSAAVAQTKVSPKKATSRKIP, and AERR…GLAS. Residues 92 to 106 are compositionally biased toward acidic residues; that stretch reads PDSDLNDAEDEEDLE. The span at 151–166 shows a compositional bias: polar residues; that stretch reads TSDSGPPSQHRSVCSW. The segment covering 265 to 275 has biased composition (basic and acidic residues); that stretch reads KKEQQKEDAPQ. The span at 287 to 297 shows a compositional bias: basic residues; the sequence is SPKKATSRKIP. The span at 386–396 shows a compositional bias: basic and acidic residues; sequence AERRETRETTR. A coiled-coil region spans residues 510-577; the sequence is EEVFKAKLKE…ALKQAGLEEE (68 aa).

It belongs to the FAM161 family. Interacts with FAM161A.

The polypeptide is Protein FAM161B (Fam161b) (Mus musculus (Mouse)).